Here is a 273-residue protein sequence, read N- to C-terminus: Aegyptin (273 aa).

An N-terminal signal peptide occupies residues 1 to 19 (MKPLVKLFLLFCLVGIVLS). The interval 20-160 (RPMPEDEEPV…SEKNDPADTY (141 aa)) is disordered. Acidic residues predominate over residues 24 to 62 (EDEEPVAEGGDDDASGESEGEEETTDDAGGDGGEEENEG). The segment covering 63–86 (EEHAGDKDAGGEDTGKEENTGHDD) has biased composition (basic and acidic residues). Acidic residues predominate over residues 87 to 145 (AGEEDAGEEDAGEEDAGEEDAGEEDAEKEEGEKEDAGDDAGSDDGEEDSTGGDEGEDNA). Residues 137–273 (GGDEGEDNAE…IKSCVSSKGR (137 aa)) are mediates binding of host collagen. Residues 146–158 (EDSKGSEKNDPAD) are compositionally biased toward basic and acidic residues. 2 disulfides stabilise this stretch: cysteine 213–cysteine 267 and cysteine 235–cysteine 245.

This sequence belongs to the aegyptin family. In terms of assembly, monomer; exhibits non-globular elongated shape in solution. Female saliva (at protein level). Adult female salivary gland (at protein level).

The protein resides in the secreted. Its function is as follows. Modulates blood feeding of female mosquitoes on vertebrate hosts. Inhibits collagen-induced platelet aggregation in the host via preventing collagen interaction with its three major ligands: glycoprotein VI, integrin alpha-2/beta-1 (ITGA2/ITGB1) and von Willebrand factor (VWF). Prevents collagen-mediated thrombus formation in the host. Binds to host collagens but not to laminin, vitronectin (VTN), fibronectin (FN1), von Willebrand factor (VWF) and fibrinogen. Influences cytokine production and populations of circulating leukocytes. (Microbial infection) Reduces replication of dengue virus type 2 at inoculation site and viremia levels on day 2 post-inoculation. Promotes production of pro-inflammatory cytokines, such as GM-CSF (CSF2), IFN-gamma (IFNG), IL5 and IL6, in the lymph nodes of mice infected with dengue virus type 2. Increases the number of circulating eosinophils in mice infected with dengue virus type 2. Decreases the number of circulating monocytes in mice infected with dengue virus type 2. This chain is Aegyptin, found in Aedes aegypti (Yellowfever mosquito).